Reading from the N-terminus, the 98-residue chain is MSRNELDERIETYYVRVRGVVQGVGFRHATVREAHALKLRGWVANLEDGSVEAMIQGPGAQIDRMLAWLRHGPPAARVTEVTFEERHVERRFERFQQQ.

The 87-residue stretch at 12 to 98 (TYYVRVRGVV…ERRFERFQQQ (87 aa)) folds into the Acylphosphatase-like domain. Residues Arg27 and Asn45 contribute to the active site.

It belongs to the acylphosphatase family.

The catalysed reaction is an acyl phosphate + H2O = a carboxylate + phosphate + H(+). This chain is Acylphosphatase (acyP), found in Burkholderia vietnamiensis (strain G4 / LMG 22486) (Burkholderia cepacia (strain R1808)).